Consider the following 320-residue polypeptide: Malate dehydrogenase (320 aa).

Residues 10 to 15 and Asp34 each bind NAD(+); that span reads GAGNIG. Substrate is bound by residues Arg83 and Arg89. NAD(+) is bound by residues Asn96 and 119 to 121; that span reads ITN. Substrate-binding residues include Asn121 and Arg152. The active-site Proton acceptor is the His176.

The protein belongs to the LDH/MDH superfamily. MDH type 3 family.

It catalyses the reaction (S)-malate + NAD(+) = oxaloacetate + NADH + H(+). In terms of biological role, catalyzes the reversible oxidation of malate to oxaloacetate. The chain is Malate dehydrogenase from Rhizorhabdus wittichii (strain DSM 6014 / CCUG 31198 / JCM 15750 / NBRC 105917 / EY 4224 / RW1) (Sphingomonas wittichii).